We begin with the raw amino-acid sequence, 57 residues long: UPF0391 membrane protein Nwi_2359 (57 aa).

Helical transmembrane passes span W4–A24 and I30–F50.

This sequence belongs to the UPF0391 family.

The protein localises to the cell membrane. The chain is UPF0391 membrane protein Nwi_2359 from Nitrobacter winogradskyi (strain ATCC 25391 / DSM 10237 / CIP 104748 / NCIMB 11846 / Nb-255).